We begin with the raw amino-acid sequence, 253 residues long: Glucosamine-6-phosphate deaminase (253 aa).

D65 functions as the Proton acceptor; for enolization step in the catalytic mechanism. Residue N133 is the For ring-opening step of the active site. Residue H135 is the Proton acceptor; for ring-opening step of the active site. The active-site For ring-opening step is the E140.

This sequence belongs to the glucosamine/galactosamine-6-phosphate isomerase family. NagB subfamily.

It carries out the reaction alpha-D-glucosamine 6-phosphate + H2O = beta-D-fructose 6-phosphate + NH4(+). It functions in the pathway amino-sugar metabolism; N-acetylneuraminate degradation; D-fructose 6-phosphate from N-acetylneuraminate: step 5/5. In terms of biological role, catalyzes the reversible isomerization-deamination of glucosamine 6-phosphate (GlcN6P) to form fructose 6-phosphate (Fru6P) and ammonium ion. The polypeptide is Glucosamine-6-phosphate deaminase (Corynebacterium glutamicum (strain ATCC 13032 / DSM 20300 / JCM 1318 / BCRC 11384 / CCUG 27702 / LMG 3730 / NBRC 12168 / NCIMB 10025 / NRRL B-2784 / 534)).